Consider the following 444-residue polypeptide: Spermatogenesis-associated protein 1 (444 aa).

The stretch at Ser-268 to Leu-403 forms a coiled coil.

In terms of assembly, interacts with IFT20. Highly abundant in the testis, and is also expressed in the heart and kidney (at protein level).

It localises to the cytoplasmic vesicle. The protein resides in the secretory vesicle. The protein localises to the acrosome. This is Spermatogenesis-associated protein 1 (Spata1) from Mus musculus (Mouse).